The chain runs to 355 residues: MRRQLRSRRAPALPYGYRYRLDDQDEVNQNYLADEEEEAEEEARVMVVPDLEEEEEEEEEKEEEEKEEEDSHSQETDSAWWRKLQIVNEYLWDPEKRTSLARTGQSWSLILVIYFFFYASLAAVITLCMYTLFLTISPYMPTFTERVKPPGVMIRPFAHSLNFNFNVSEPDTWQHYVISLNGFLQGYNDSLQEEMNVDCPPGQYFIQDGDEDEDKKACQFKRSFLKNCSGLEDPTFGYSTGQPCILLKMNRIVGFRPERGDPVKVSCKVQRGDENDIRSINYYPESASFDLRYYPYYGKLTHVNYTSPLVAMHFTDVVKNQAVPVQCQLKGKGIINDVINDRFVGRVIFTLNIET.

Over 1-108 (MRRQLRSRRA…SLARTGQSWS (108 aa)) the chain is Nuclear. The tract at residues 33–77 (ADEEEEAEEEARVMVVPDLEEEEEEEEEKEEEEKEEEDSHSQETD) is disordered. The span at 50–68 (DLEEEEEEEEEKEEEEKEE) shows a compositional bias: acidic residues. Residues 109 to 129 (LILVIYFFFYASLAAVITLCM) traverse the membrane as a helical; Signal-anchor for type II membrane protein segment. Residues 130–355 (YTLFLTISPY…RVIFTLNIET (226 aa)) are Perinuclear space-facing.

It belongs to the X(+)/potassium ATPases subunit beta family. In terms of assembly, associates with a SMAD7-transcriptional complex. Interacts with SNW1 and TOR1AIP1. Does not associate with known Na,K-ATPase alpha-subunits.

The protein resides in the nucleus inner membrane. In terms of biological role, may act as a transcriptional coregulator during muscle development through its interaction with SNW1. Has lost its ancestral function as a Na,K-ATPase beta-subunit. The sequence is that of Protein ATP1B4 (ATP1B4) from Bos taurus (Bovine).